The following is a 151-amino-acid chain: Large ribosomal subunit protein uL13 (151 aa).

The protein belongs to the universal ribosomal protein uL13 family. In terms of assembly, part of the 50S ribosomal subunit.

Functionally, this protein is one of the early assembly proteins of the 50S ribosomal subunit, although it is not seen to bind rRNA by itself. It is important during the early stages of 50S assembly. The protein is Large ribosomal subunit protein uL13 of Petrotoga mobilis (strain DSM 10674 / SJ95).